The chain runs to 694 residues: MPEFLEDPSVLTKDKLKSELVANNVTLPAGEQRKDVYVQLYLQHLTARNRPPLPAGTNSKGPPDFSSDEEREPTPVLGSGAAAAGRSRAAVGRKATKKTDKPRQEDKDDLDVTELTNEDLLDQLVKYGVNPGPIVGTTRKLYEKKLLKLREQGTESRSSTPLPTISSSAENTRQNGSNDSDRYSDNEEGKKKEHKKVKSTRDIVPFSELGTTPSGGGFFQGISFPEISTRPPLGSTELQAAKKVHTSKGDLPREPLVATNLPGRGQLQKLASERNLFISCKSSHDRCLEKSSSSSSQPEHSAMLVSTAASPSLIKETTTGYYKDIVENICGREKSGIQPLCPERSHISDQSPLSSKRKALEESESSQLISPPLAQAIRDYVNSLLVQGGVGSLPGTSNSMPPLDVENIQKRIDQSKFQETEFLSPPRKVPRLSEKSVEERDSGSFVAFQNIPGSELMSSFAKTVVSHSLTTLGLEVAKQSQHDKIDASELSFPFHESILKVIEEEWQQVDRQLPSLACKYPVSSREATQILSVPKVDDEILGFISEATPLGGIQAASTESCNQQLDLALCRAYEAAASALQIATHTAFVAKAMQADISQAAQILSSDPSRTHQALGILSKTYDAASYICEAAFDEVKMAAHTMGNATVGRRYLWLKDCKINLASKNKLASTPFKGGTLFGGEVCKVIKKRGNKH.

Residues 5–48 form the LEM-like domain; it reads LEDPSVLTKDKLKSELVANNVTLPAGEQRKDVYVQLYLQHLTAR. Disordered regions lie at residues 47–117 and 150–209; these read ARNR…ELTN and REQG…FSEL. The segment at 49–108 is linker; that stretch reads NRPPLPAGTNSKGPPDFSSDEEREPTPVLGSGAAAAGRSRAAVGRKATKKTDKPRQEDKD. Thr-57 carries the post-translational modification Phosphothreonine. A phosphoserine mark is found at Ser-59, Ser-66, and Ser-67. Thr-74 is subject to Phosphothreonine. Residues 78 to 93 show a composition bias toward low complexity; the sequence is GSGAAAAGRSRAAVGR. The residue at position 79 (Ser-79) is a Phosphoserine. An omega-N-methylarginine mark is found at Arg-86 and Arg-88. The segment covering 97–106 has biased composition (basic and acidic residues); sequence KKTDKPRQED. Positions 107 to 117 are enriched in acidic residues; that stretch reads KDDLDVTELTN. Positions 109-153 constitute an LEM domain; it reads DLDVTELTNEDLLDQLVKYGVNPGPIVGTTRKLYEKKLLKLREQG. Position 154 is a phosphothreonine (Thr-154). A compositionally biased stretch (polar residues) spans 155-178; it reads ESRSSTPLPTISSSAENTRQNGSN. Phosphoserine occurs at positions 156 and 159. 2 positions are modified to phosphothreonine: Thr-160 and Thr-164. A phosphoserine mark is found at Ser-166 and Ser-168. The span at 179-191 shows a compositional bias: basic and acidic residues; sequence DSDRYSDNEEGKK. The Nuclear localization signal signature appears at 190 to 196; sequence KKKEHKK. 6 positions are modified to phosphoserine: Ser-272, Ser-312, Ser-351, Ser-354, Ser-370, and Ser-424. The disordered stretch occupies residues 338-368; the sequence is QPLCPERSHISDQSPLSSKRKALEESESSQL. Positions 558-657 form a coiled coil; sequence TESCNQQLDL…VGRRYLWLKD (100 aa). Lys-656 is modified (N6-acetyllysine).

Belongs to the LEM family. In terms of assembly, interacts with LMNA, BANF1 and RB1 and with chromosomes. Associates directly or indirectly with lamins at specific cell-cycle stages. Interacts with CMTM6. Post-translationally, phosphorylated in a mitose-specific manner. Expressed in many tissues. Most abundant in adult thymus and fetal liver.

The protein resides in the nucleus. The protein localises to the chromosome. Its function is as follows. May be involved in the structural organization of the nucleus and in the post-mitotic nuclear assembly. Plays an important role, together with LMNA, in the nuclear anchorage of RB1. TP and TP5 may play a role in T-cell development and function. TP5 is an immunomodulating pentapeptide. The sequence is that of Lamina-associated polypeptide 2, isoform alpha (TMPO) from Homo sapiens (Human).